The following is a 281-amino-acid chain: MEMO1 family protein PAE0818 (281 aa).

Belongs to the MEMO1 family.

The sequence is that of MEMO1 family protein PAE0818 from Pyrobaculum aerophilum (strain ATCC 51768 / DSM 7523 / JCM 9630 / CIP 104966 / NBRC 100827 / IM2).